Here is a 128-residue protein sequence, read N- to C-terminus: Large-conductance mechanosensitive channel (128 aa).

Transmembrane regions (helical) follow at residues 11 to 31 (FALKGNVLDLAVAVVIGAAFG) and 70 to 90 (GAFIQSIVDFIIIAFAIFIFV).

The protein belongs to the MscL family. Homopentamer.

Its subcellular location is the cell membrane. Functionally, channel that opens in response to stretch forces in the membrane lipid bilayer. May participate in the regulation of osmotic pressure changes within the cell. The protein is Large-conductance mechanosensitive channel of Listeria monocytogenes serotype 4a (strain HCC23).